A 283-amino-acid polypeptide reads, in one-letter code: Cyclin-C (283 aa).

Positions Asn46–Glu144 constitute a Cyclin N-terminal domain. Residues Thr252 to Ser283 form a disordered region. A compositionally biased stretch (polar residues) spans Pro272–Ser283.

Belongs to the cyclin family. Cyclin C subfamily. In terms of assembly, component of the Mediator complex. The cylin/CDK pair formed by CCNC/CDK8 also associates with the large subunit of RNA polymerase II.

It is found in the nucleus. Its function is as follows. Component of the Mediator complex, a coactivator involved in regulated gene transcription of nearly all RNA polymerase II-dependent genes. Mediator functions as a bridge to convey information from gene-specific regulatory proteins to the basal RNA polymerase II transcription machinery. Mediator is recruited to promoters by direct interactions with regulatory proteins and serves as a scaffold for the assembly of a functional preinitiation complex with RNA polymerase II and the general transcription factors. Binds to and activates cyclin-dependent kinase CDK8 that phosphorylates the CTD (C-terminal domain) of the large subunit of RNA polymerase II (RNAp II), which may inhibit the formation of a transcription initiation complex. The sequence is that of Cyclin-C (CCNC) from Gallus gallus (Chicken).